We begin with the raw amino-acid sequence, 449 residues long: Glutamate--tRNA ligase (449 aa).

The 'HIGH' region motif lies at 10-20 (PSPTGFLHIGN). The 'KMSKS' region signature appears at 214-218 (KLSKR). ATP is bound at residue Lys-217.

The protein belongs to the class-I aminoacyl-tRNA synthetase family. Glutamate--tRNA ligase type 1 subfamily. In terms of assembly, monomer.

The protein resides in the cytoplasm. It catalyses the reaction tRNA(Glu) + L-glutamate + ATP = L-glutamyl-tRNA(Glu) + AMP + diphosphate. Functionally, catalyzes the attachment of glutamate to tRNA(Glu) in a two-step reaction: glutamate is first activated by ATP to form Glu-AMP and then transferred to the acceptor end of tRNA(Glu). The polypeptide is Glutamate--tRNA ligase (Onion yellows phytoplasma (strain OY-M)).